Reading from the N-terminus, the 154-residue chain is Cytochrome c-type biogenesis protein CcmE (154 aa).

At 1-8 (MHPQRKQR) the chain is on the cytoplasmic side. A helical; Signal-anchor for type II membrane protein membrane pass occupies residues 9 to 29 (LMIVLFIVVFSSLAVGLIAYA). Residues 30-154 (LRENINLFYP…ATCGGLNYGA (125 aa)) lie on the Periplasmic side of the membrane. Heme contacts are provided by H124 and Y128.

It belongs to the CcmE/CycJ family.

It localises to the cell inner membrane. Its function is as follows. Heme chaperone required for the biogenesis of c-type cytochromes. Transiently binds heme delivered by CcmC and transfers the heme to apo-cytochromes in a process facilitated by CcmF and CcmH. This Cellvibrio japonicus (strain Ueda107) (Pseudomonas fluorescens subsp. cellulosa) protein is Cytochrome c-type biogenesis protein CcmE.